Here is a 57-residue protein sequence, read N- to C-terminus: Granulin-1 (57 aa).

2 disulfide bridges follow: cysteine 4-cysteine 16 and cysteine 10-cysteine 26.

It belongs to the granulin family. Granulins are disulfide bridged. In terms of tissue distribution, ubiquitous.

It is found in the secreted. Its function is as follows. Granulins have possible cytokine-like activity. They may play a role in inflammation, wound repair, and tissue remodeling. The sequence is that of Granulin-1 from Cyprinus carpio (Common carp).